The primary structure comprises 286 residues: MSATEASAGEEAASATSQAFVLPEGKVIPNTVFVGGIDITMDEMAIGNLFEKYGKVKDLKIITDRTGVSKGYGFVSFYDEVDVQKIVKSQINFHGKKLKLGPAIRKMQRICTYVQTSPVVISPPTQFHPTWNSQNADSYIQHSPIISPVTQYVQACPYPSSPPMAIQQIPVGCQQPSYFQVSPQWPTDQRNYMFPSPAFTFNYNCCEIDPNGGEPMPREYHIDQAVSASGANLQKRYVDMSTQTIISCLFDPAKKVRLFASQEDYIQDDSVHQFRRSKSVIKRVSN.

One can recognise an RRM domain in the interval Asn-30 to Arg-105. Residues Ala-155 to Gln-180 form the DAZ domain.

This sequence belongs to the RRM DAZ family. As to quaternary structure, interacts with the C-terminus of pabp1 and with epabp. Prior to oocyte maturation, found in a complex with epabp and pum2 proteins and spdy1 mRNA; pum2 dissociates from the complex during maturation. In terms of tissue distribution, germ-line specific; expressed in adult testis and ovary. Localized specifically to the oocyte and embryonic germ plasm and to migrating primordial germ cells (PGCs).

The protein resides in the cytoplasm. In terms of biological role, RNA-binding protein that is required for primordial germ cell (PGC) differentiation and indirectly necessary for the migration of PGCs through the endoderm. May promote meiotic cell division during spermatogenesis. Shows a preference for G- and U-rich RNAs and probably binds the 3'-UTR of target mRNAs. Stimulates the initiation of translation of mRNAs through the recruitment of poly(A)-binding proteins (PABPs). The chain is Deleted in azoospermia-like from Xenopus tropicalis (Western clawed frog).